The chain runs to 409 residues: Pleckstrin homology domain-containing family O member 1 (409 aa).

Residues 1-24 form a disordered region; sequence MMKKNNSAKRGPQDGNQQPAPPEK. One can recognise a PH domain in the interval 21–132; it reads PPEKVGWVRK…WINALNSAIT (112 aa). The interval 133-193 is interaction with capping proteins (CPs); the sequence is RAKNRILDEV…MLTLDLIQEE (61 aa). Residues 136–308 are interaction with ATM, CKIP, IFP35 and NMI; sequence NRILDEVTVE…LPNPGQLSRI (173 aa). The tract at residues 218–267 is disordered; it reads LAGSRRRADSDRIQPSADRASSLSRPWEKTDKGATYTPQAPKKLTPTEKG. A phosphoserine mark is found at Ser-227 and Ser-271. Residues 308-409 form a negative regulator of AP-1 activity region; the sequence is IQDLVARKLE…PHSQYRKSLM (102 aa). 2 disordered regions span residues 325 to 350 and 390 to 409; these read EVQG…ESEQ and TPDS…KSLM. The segment covering 331–340 has biased composition (basic and acidic residues); it reads DGKRKAKDPP. Residue Ser-342 is modified to Phosphoserine. Over residues 390–402 the composition is skewed to polar residues; sequence TPDSHLRQTTPHS.

In terms of assembly, heterodimer or homodimer. Interacts with CK2 and actin capping subunits (capping protein CP-alpha and CP-beta). CKIP1 and CK2 together inhibit the activity of actin capping protein at the barbed ends of actin filaments. Interacts with ATM, IFP35, JUN, JUND, NMI and PI3K. Interacts with AKT1, AKT2 and AKT3 (each isozyme of PKB), PtdIns(3,5)P2, PtdIns(4,5)P2 and PtdIns(3,4,5)P2. Post-translationally, C-terminal fragments could be released during apoptosis via caspase-3-dependent cleavage. Abundantly expressed in skeletal muscle and heart, moderately in kidney, liver, brain and placenta and sparingly in the pancreas and lung. Easily detectable in cell lines such as MOLT-4, HEK293 and Jurkat.

The protein localises to the cell membrane. It localises to the nucleus. The protein resides in the cytoplasm. Functionally, plays a role in the regulation of the actin cytoskeleton through its interactions with actin capping protein (CP). May function to target CK2 to the plasma membrane thereby serving as an adapter to facilitate the phosphorylation of CP by protein kinase 2 (CK2). Appears to target ATM to the plasma membrane. Appears to also inhibit tumor cell growth by inhibiting AKT-mediated cell-survival. Also implicated in PI3K-regulated muscle differentiation, the regulation of AP-1 activity (plasma membrane bound AP-1 regulator that translocates to the nucleus) and the promotion of apoptosis induced by tumor necrosis factor TNF. When bound to PKB, it inhibits it probably by decreasing PKB level of phosphorylation. This is Pleckstrin homology domain-containing family O member 1 (PLEKHO1) from Homo sapiens (Human).